The chain runs to 64 residues: Peptide Ctri9677 (64 aa).

Positions 1–22 are cleaved as a signal peptide; that stretch reads MKNNTILFTFLIVFLIASQIEA. The residue at position 36 (Leu-36) is a Leucine amide. Positions 40–64 are excised as a propeptide; the sequence is SEDREFFDFFTDDNLAALEKALKEY.

The protein belongs to the non-disulfide-bridged peptide (NDBP) superfamily. Short antimicrobial peptide (group 4) family. In terms of tissue distribution, expressed by the venom gland.

The protein localises to the secreted. Functionally, antimicrobial peptide. The chain is Peptide Ctri9677 from Chaerilus tricostatus (Scorpion).